Consider the following 353-residue polypeptide: Putative protein SPATA31J1 (353 aa).

The chain crosses the membrane as a helical span at residues 34–54 (IPQIIHFVLFVVFSLVILIIL). Positions 122–271 (EGSSHHLPRQ…NPGWVSWSDS (150 aa)) are disordered. Residues 182-195 (SVESLGSPSSLSSS) are compositionally biased toward low complexity. Residues 211–221 (PPASTLSPNPT) are compositionally biased toward polar residues. Residues 222-237 (SSTESLGYLSSLSSSQ) show a composition bias toward low complexity. The segment covering 244-262 (PLKHPSHKPRGRSLPRRRN) has biased composition (basic residues).

This sequence belongs to the SPATA31 family.

Its subcellular location is the membrane. This Homo sapiens (Human) protein is Putative protein SPATA31J1.